A 1236-amino-acid chain; its full sequence is Chitinase-like protein PB1E7.04c (1236 aa).

The first 19 residues, 1–19 (MRLISSLLLLVYSARLALS), serve as a signal peptide directing secretion. Residues N21, N24, N54, N123, N225, N237, N255, N267, N277, N288, and N309 are each glycosylated (N-linked (GlcNAc...) asparagine). In terms of domain architecture, GH18 spans 26–325 (TAVLGYWGSN…EAIHKILDTK (300 aa)). Disordered regions lie at residues 326–367 (SKHS…TSSA), 449–497 (VSSI…QSTL), and 584–625 (TSSP…STIL). Residues 339–351 (QGLESTSSIALNP) are compositionally biased toward polar residues. Residues 352 to 367 (TSSISSTSSSSSTSSA) show a composition bias toward low complexity. N-linked (GlcNAc...) asparagine glycosylation is found at N715, N737, N768, N786, and N813. Disordered stretches follow at residues 804–836 (ISTS…LAAN), 868–927 (TTAL…TSSS), 946–979 (TPTS…SSIA), and 1125–1159 (AASG…TPSN). Polar residues predominate over residues 810–821 (NEYNTSFHAPTV). The span at 822–832 (SSTTSSSSTTS) shows a compositional bias: low complexity. The span at 1125–1156 (AASGSSTVTSSATASSSSSAATTADSSVTTDT) shows a compositional bias: low complexity.

This sequence belongs to the glycosyl hydrolase 18 family. Chitinase class III subfamily.

The protein resides in the secreted. This Schizosaccharomyces pombe (strain 972 / ATCC 24843) (Fission yeast) protein is Chitinase-like protein PB1E7.04c.